A 31-amino-acid polypeptide reads, in one-letter code: Aspartate aminotransferase, cytoplasmic (31 aa).

The protein belongs to the class-I pyridoxal-phosphate-dependent aminotransferase family. Homodimer. It depends on pyridoxal 5'-phosphate as a cofactor.

It localises to the cytoplasm. The enzyme catalyses L-aspartate + 2-oxoglutarate = oxaloacetate + L-glutamate. It carries out the reaction L-cysteine + 2-oxoglutarate = 2-oxo-3-sulfanylpropanoate + L-glutamate. It catalyses the reaction (2S)-2-aminobutanoate + 2-oxoglutarate = 2-oxobutanoate + L-glutamate. The catalysed reaction is 3-sulfino-L-alanine + 2-oxoglutarate = 3-sulfinopyruvate + L-glutamate. Its function is as follows. Biosynthesis of L-glutamate from L-aspartate or L-cysteine. Important regulator of levels of glutamate, the major excitatory neurotransmitter of the vertebrate central nervous system. Acts as a scavenger of glutamate in brain neuroprotection. The aspartate aminotransferase activity is involved in hepatic glucose synthesis during development and in adipocyte glyceroneogenesis. Using L-cysteine as substrate, regulates levels of mercaptopyruvate, an important source of hydrogen sulfide. Mercaptopyruvate is converted into H(2)S via the action of 3-mercaptopyruvate sulfurtransferase (3MST). Hydrogen sulfide is an important synaptic modulator and neuroprotectant in the brain. This is Aspartate aminotransferase, cytoplasmic from Oryctolagus cuniculus (Rabbit).